The following is a 495-amino-acid chain: Ribose import ATP-binding protein RbsA (495 aa).

2 consecutive ABC transporter domains span residues 7–242 (LEMR…VGRP) and 250–491 (ERDI…TGVN). 39 to 46 (GENGAGKS) lines the ATP pocket.

It belongs to the ABC transporter superfamily. Ribose importer (TC 3.A.1.2.1) family. The complex is composed of an ATP-binding protein (RbsA), two transmembrane proteins (RbsC) and a solute-binding protein (RbsB).

The protein localises to the cell inner membrane. The catalysed reaction is D-ribose(out) + ATP + H2O = D-ribose(in) + ADP + phosphate + H(+). Its function is as follows. Part of the ABC transporter complex RbsABC involved in ribose import. Responsible for energy coupling to the transport system. This is Ribose import ATP-binding protein RbsA from Shigella dysenteriae serotype 1 (strain Sd197).